Reading from the N-terminus, the 269-residue chain is Regulatory protein RecX (269 aa).

This sequence belongs to the RecX family.

It localises to the cytoplasm. In terms of biological role, modulates RecA activity. This chain is Regulatory protein RecX, found in Geobacillus thermodenitrificans (strain NG80-2).